Consider the following 165-residue polypeptide: Cytochrome c-type biogenesis protein CcmE (165 aa).

The Cytoplasmic segment spans residues 1 to 7 (MTRKQKR). A helical; Signal-anchor for type II membrane protein membrane pass occupies residues 8 to 28 (LAIIGGGMSFIVAAVLLVMFA). Topologically, residues 29-165 (FGQSIAYFYM…ASGDKTGATK (137 aa)) are periplasmic. Heme is bound by residues His-123 and Tyr-127. Positions 138 to 165 (DKGLWQQGAEGAAPAASAASGDKTGATK) are disordered. Residues 145 to 158 (GAEGAAPAASAASG) show a composition bias toward low complexity.

It belongs to the CcmE/CycJ family.

The protein localises to the cell inner membrane. Functionally, heme chaperone required for the biogenesis of c-type cytochromes. Transiently binds heme delivered by CcmC and transfers the heme to apo-cytochromes in a process facilitated by CcmF and CcmH. In Agrobacterium fabrum (strain C58 / ATCC 33970) (Agrobacterium tumefaciens (strain C58)), this protein is Cytochrome c-type biogenesis protein CcmE.